Consider the following 371-residue polypeptide: Queuine tRNA-ribosyltransferase (371 aa).

Residue aspartate 90 is the Proton acceptor of the active site. Substrate-binding positions include 90–94 (DSGGF), aspartate 144, glutamine 188, and glycine 215. Positions 246-252 (GVGTPED) are RNA binding. Aspartate 265 serves as the catalytic Nucleophile. An RNA binding; important for wobble base 34 recognition region spans residues 270–274 (TRNAR). The Zn(2+) site is built by cysteine 303, cysteine 305, cysteine 308, and histidine 334.

Belongs to the queuine tRNA-ribosyltransferase family. As to quaternary structure, homodimer. Within each dimer, one monomer is responsible for RNA recognition and catalysis, while the other monomer binds to the replacement base PreQ1. Zn(2+) serves as cofactor.

It catalyses the reaction 7-aminomethyl-7-carbaguanine + guanosine(34) in tRNA = 7-aminomethyl-7-carbaguanosine(34) in tRNA + guanine. Its pathway is tRNA modification; tRNA-queuosine biosynthesis. Its function is as follows. Catalyzes the base-exchange of a guanine (G) residue with the queuine precursor 7-aminomethyl-7-deazaguanine (PreQ1) at position 34 (anticodon wobble position) in tRNAs with GU(N) anticodons (tRNA-Asp, -Asn, -His and -Tyr). Catalysis occurs through a double-displacement mechanism. The nucleophile active site attacks the C1' of nucleotide 34 to detach the guanine base from the RNA, forming a covalent enzyme-RNA intermediate. The proton acceptor active site deprotonates the incoming PreQ1, allowing a nucleophilic attack on the C1' of the ribose to form the product. After dissociation, two additional enzymatic reactions on the tRNA convert PreQ1 to queuine (Q), resulting in the hypermodified nucleoside queuosine (7-(((4,5-cis-dihydroxy-2-cyclopenten-1-yl)amino)methyl)-7-deazaguanosine). This Neisseria meningitidis serogroup C (strain 053442) protein is Queuine tRNA-ribosyltransferase.